The following is a 338-amino-acid chain: D-erythrose-4-phosphate dehydrogenase (338 aa).

NAD(+) is bound at residue 12–13; that stretch reads RI. Residues 154–156, R200, 213–214, and R236 contribute to the substrate site; these read SCT and TK. The Nucleophile role is filled by C155. N318 contributes to the NAD(+) binding site.

Belongs to the glyceraldehyde-3-phosphate dehydrogenase family. Epd subfamily. Homotetramer.

The protein resides in the cytoplasm. The enzyme catalyses D-erythrose 4-phosphate + NAD(+) + H2O = 4-phospho-D-erythronate + NADH + 2 H(+). Its pathway is cofactor biosynthesis; pyridoxine 5'-phosphate biosynthesis; pyridoxine 5'-phosphate from D-erythrose 4-phosphate: step 1/5. Catalyzes the NAD-dependent conversion of D-erythrose 4-phosphate to 4-phosphoerythronate. The protein is D-erythrose-4-phosphate dehydrogenase of Yersinia pestis bv. Antiqua (strain Antiqua).